The following is a 358-amino-acid chain: Vanillin synthase (358 aa).

A signal peptide spans 1-21 (MARLLLLLVGVLIACAAGARA). The propeptide at 22–140 (GSEFLAEDNP…RGNHKLTSAI (119 aa)) is activation peptide. An N-linked (GlcNAc...) asparagine glycan is attached at asparagine 125. Cystine bridges form between cysteine 162–cysteine 205 and cysteine 196–cysteine 238. The active site involves cysteine 165. Asparagine 254 carries N-linked (GlcNAc...) asparagine glycosylation. Cysteine 296 and cysteine 346 are disulfide-bonded. Catalysis depends on residues histidine 305 and asparagine 325.

This sequence belongs to the peptidase C1 family.

The enzyme catalyses (E)-ferulate + H2O = vanillin + acetate. The catalysed reaction is 4-O-beta-D-glucosyl-trans-ferulate + H2O = 4-O-beta-D-glucosyl-vanillin + acetate. Its pathway is aromatic compound metabolism; phenylpropanoid biosynthesis. Involved in the biosynthesis of vanillin and derivative natural products. Catalyzes the double carbon bond cleavage of ferulic acid to vanillin and of respective glucosides. This chain is Vanillin synthase, found in Glechoma hederacea (Ground-ivy).